The sequence spans 581 residues: Pectinesterase 3 (581 aa).

Residues 1–55 form the signal peptide; the sequence is MDTIKSFKGYGKVNELEQQAYEKKTRKRLIIIAVSSIVLIAVIIAAVAGVVIHNR. 5 N-linked (GlcNAc...) asparagine glycosylation sites follow: asparagine 101, asparagine 156, asparagine 200, asparagine 217, and asparagine 268. Positions 348 and 378 each coordinate substrate. Aspartate 401 (proton donor) is an active-site residue. A disulfide bridge connects residues cysteine 415 and cysteine 435. The Nucleophile role is filled by aspartate 422. N-linked (GlcNAc...) asparagine glycosylation is present at asparagine 477. Substrate is bound by residues arginine 486 and tryptophan 488.

In the N-terminal section; belongs to the PMEI family. The protein in the C-terminal section; belongs to the pectinesterase family.

The protein resides in the secreted. The protein localises to the cell wall. The catalysed reaction is [(1-&gt;4)-alpha-D-galacturonosyl methyl ester](n) + n H2O = [(1-&gt;4)-alpha-D-galacturonosyl](n) + n methanol + n H(+). It functions in the pathway glycan metabolism; pectin degradation; 2-dehydro-3-deoxy-D-gluconate from pectin: step 1/5. Functionally, may have roles in the deposition of pectin in developing tissues and in the wall loosening and cell separation that occurs in cell expansion, fruit ripening and abscission. The protein is Pectinesterase 3 (MPE3) of Phaseolus vulgaris (Kidney bean).